We begin with the raw amino-acid sequence, 1433 residues long: Bacillopeptidase F (1433 aa).

Positions 1-30 (MRKKTKNRLISSVLSTVVISSLLFPGAAGA) are cleaved as a signal peptide. The propeptide occupies 31–194 (SSKVTSPSVK…NMKKAQKAIK (164 aa)). An Inhibitor I9 domain is found at 68–177 (TFLIKFKDLA…KVLPNEKRQL (110 aa)). Residues 200 to 512 (EWNVDQIDAP…HGLVNAFDAV (313 aa)) form the Peptidase S8 domain. Active-site charge relay system residues include Asp-227, His-274, and Ser-452. Positions 756-1433 (SAYKGQNIQV…NGKLNMNTEN (678 aa)) are excised as a propeptide. Residues 800-830 (KLGVEKPSGKQKKKPVNPKKAKPSANTAVKH) form a disordered region. The span at 808 to 821 (GKQKKKPVNPKKAK) shows a compositional bias: basic residues.

The protein belongs to the peptidase S8 family.

The protein localises to the secreted. This is Bacillopeptidase F (bpr) from Bacillus subtilis (strain 168).